Here is a 123-residue protein sequence, read N- to C-terminus: Large ribosomal subunit protein uL29 (123 aa).

This sequence belongs to the universal ribosomal protein uL29 family. Component of the large ribosomal subunit.

Its subcellular location is the cytoplasm. Its function is as follows. Component of the large ribosomal subunit. The ribosome is a large ribonucleoprotein complex responsible for the synthesis of proteins in the cell. The polypeptide is Large ribosomal subunit protein uL29 (rpl35) (Xenopus tropicalis (Western clawed frog)).